The following is a 725-amino-acid chain: Methionine--tRNA ligase (725 aa).

The short motif at 27 to 37 (PYANGQIHIGH) is the 'HIGH' region element. Zn(2+) contacts are provided by Cys158, Cys161, Cys171, and Cys174. Residues 348 to 352 (KMSKS) carry the 'KMSKS' region motif. Lys351 contributes to the ATP binding site. One can recognise a tRNA-binding domain in the interval 619–725 (DFAKIDLRIA…SGAKPGMRVK (107 aa)).

This sequence belongs to the class-I aminoacyl-tRNA synthetase family. MetG type 1 subfamily. Homodimer. The cofactor is Zn(2+).

The protein localises to the cytoplasm. The catalysed reaction is tRNA(Met) + L-methionine + ATP = L-methionyl-tRNA(Met) + AMP + diphosphate. Functionally, is required not only for elongation of protein synthesis but also for the initiation of all mRNA translation through initiator tRNA(fMet) aminoacylation. This chain is Methionine--tRNA ligase, found in Burkholderia mallei (strain NCTC 10247).